A 134-amino-acid polypeptide reads, in one-letter code: Retinoid-binding protein 7 (134 aa).

Belongs to the calycin superfamily. Fatty-acid binding protein (FABP) family. Expressed primarily in kidney, heart and transverse colon. Detected in adult lymph node, appendix, ascending colon, and in fetal heart and spleen.

The protein resides in the cytoplasm. Intracellular transport of retinol. The protein is Retinoid-binding protein 7 (RBP7) of Homo sapiens (Human).